Here is a 419-residue protein sequence, read N- to C-terminus: D-amino acid dehydrogenase (419 aa).

3-17 serves as a coordination point for FAD; the sequence is VLVLGAGVAGVSSVW.

The protein belongs to the DadA oxidoreductase family. The cofactor is FAD.

It catalyses the reaction a D-alpha-amino acid + A + H2O = a 2-oxocarboxylate + AH2 + NH4(+). The protein operates within amino-acid degradation; D-alanine degradation; NH(3) and pyruvate from D-alanine: step 1/1. Its function is as follows. Oxidative deamination of D-amino acids. The chain is D-amino acid dehydrogenase from Neisseria gonorrhoeae (strain ATCC 700825 / FA 1090).